We begin with the raw amino-acid sequence, 733 residues long: Polyribonucleotide nucleotidyltransferase (733 aa).

The Mg(2+) site is built by Asp503 and Asp509. One can recognise a KH domain in the interval 570 to 629 (PRLTTIQIPVDAIGMVIGKGGETIRSITEETGAEINIDDDGTVTIACSSPEATKAAVETI). Residues 639-713 (GTIYMGKVRD…GKTKFALSIK (75 aa)) enclose the S1 motif domain.

This sequence belongs to the polyribonucleotide nucleotidyltransferase family. Mg(2+) serves as cofactor.

The protein localises to the cytoplasm. It catalyses the reaction RNA(n+1) + phosphate = RNA(n) + a ribonucleoside 5'-diphosphate. Functionally, involved in mRNA degradation. Catalyzes the phosphorolysis of single-stranded polyribonucleotides processively in the 3'- to 5'-direction. The polypeptide is Polyribonucleotide nucleotidyltransferase (Chlorobaculum tepidum (strain ATCC 49652 / DSM 12025 / NBRC 103806 / TLS) (Chlorobium tepidum)).